A 230-amino-acid chain; its full sequence is Type II restriction enzyme MjaV (230 aa).

The catalysed reaction is Endonucleolytic cleavage of DNA to give specific double-stranded fragments with terminal 5'-phosphates.. Its function is as follows. A P subtype restriction enzyme that recognizes the double-stranded sequence 5'-GTAC-3'; the cleavage site is unknown. The protein is Type II restriction enzyme MjaV (mjaVR) of Methanocaldococcus jannaschii (strain ATCC 43067 / DSM 2661 / JAL-1 / JCM 10045 / NBRC 100440) (Methanococcus jannaschii).